Reading from the N-terminus, the 399-residue chain is Serpin-Z1B (399 aa).

Positions 344–368 are RCL; sequence GTEAAASTAIKMVPQQARPPSVMDF.

Belongs to the serpin family.

Its function is as follows. Inhibits chymotrypsin and cathepsin G in vitro. This chain is Serpin-Z1B, found in Triticum aestivum (Wheat).